A 303-amino-acid polypeptide reads, in one-letter code: GTPase Era (303 aa).

One can recognise an Era-type G domain in the interval Lys7 to Glu176. The interval Gly15–Ser22 is G1. Gly15–Ser22 provides a ligand contact to GTP. Residues Gln41–Asn45 form a G2 region. Residues Asp62–Gly65 are G3. Residues Asp62–Val66 and Asn125–Asp128 each bind GTP. Residues Asn125–Asp128 form a G4 region. A G5 region spans residues Ile155–Ala157. Residues Thr207–Pro284 enclose the KH type-2 domain.

The protein belongs to the TRAFAC class TrmE-Era-EngA-EngB-Septin-like GTPase superfamily. Era GTPase family. Monomer.

The protein resides in the cytoplasm. Its subcellular location is the cell membrane. In terms of biological role, an essential GTPase that binds both GDP and GTP, with rapid nucleotide exchange. Plays a role in 16S rRNA processing and 30S ribosomal subunit biogenesis and possibly also in cell cycle regulation and energy metabolism. The polypeptide is GTPase Era (Leuconostoc citreum (strain KM20)).